We begin with the raw amino-acid sequence, 635 residues long: Biosynthetic arginine decarboxylase (635 aa).

Position 101 is an N6-(pyridoxal phosphate)lysine (lysine 101). 284–294 is a substrate binding site; it reads VDVGGGLGVDY.

The protein belongs to the Orn/Lys/Arg decarboxylase class-II family. SpeA subfamily. Requires Mg(2+) as cofactor. It depends on pyridoxal 5'-phosphate as a cofactor.

It carries out the reaction L-arginine + H(+) = agmatine + CO2. The protein operates within amine and polyamine biosynthesis; agmatine biosynthesis; agmatine from L-arginine: step 1/1. Catalyzes the biosynthesis of agmatine from arginine. The sequence is that of Biosynthetic arginine decarboxylase from Tolumonas auensis (strain DSM 9187 / NBRC 110442 / TA 4).